A 475-amino-acid chain; its full sequence is Actin-related protein 10 (475 aa).

This sequence belongs to the actin family.

Its subcellular location is the cytoplasm. The protein localises to the cytoskeleton. The sequence is that of Actin-related protein 10 from Dictyostelium discoideum (Social amoeba).